Here is a 277-residue protein sequence, read N- to C-terminus: Hydroxyethylthiazole kinase (277 aa).

Residue Met55 coordinates substrate. ATP is bound by residues Arg130 and Ser176. Gly203 provides a ligand contact to substrate.

Belongs to the Thz kinase family. Mg(2+) serves as cofactor.

It carries out the reaction 5-(2-hydroxyethyl)-4-methylthiazole + ATP = 4-methyl-5-(2-phosphooxyethyl)-thiazole + ADP + H(+). The protein operates within cofactor biosynthesis; thiamine diphosphate biosynthesis; 4-methyl-5-(2-phosphoethyl)-thiazole from 5-(2-hydroxyethyl)-4-methylthiazole: step 1/1. Catalyzes the phosphorylation of the hydroxyl group of 4-methyl-5-beta-hydroxyethylthiazole (THZ). This is Hydroxyethylthiazole kinase from Cutibacterium acnes (strain DSM 16379 / KPA171202) (Propionibacterium acnes).